A 1228-amino-acid chain; its full sequence is DNA-directed RNA polymerase subunit beta (1228 aa).

Belongs to the RNA polymerase beta chain family. As to quaternary structure, the RNAP catalytic core consists of 2 alpha, 1 beta, 1 beta' and 1 omega subunit. When a sigma factor is associated with the core the holoenzyme is formed, which can initiate transcription.

It catalyses the reaction RNA(n) + a ribonucleoside 5'-triphosphate = RNA(n+1) + diphosphate. Functionally, DNA-dependent RNA polymerase catalyzes the transcription of DNA into RNA using the four ribonucleoside triphosphates as substrates. In Leptospira biflexa, this protein is DNA-directed RNA polymerase subunit beta.